Consider the following 551-residue polypeptide: Structure-specific endonuclease subunit MUS81 (551 aa).

Disordered stretches follow at residues 85 to 131 (LASG…AGYW) and 231 to 255 (PEEH…EVGV). S95 carries the post-translational modification Phosphoserine. Residues 110 to 131 (VQGSSMPVPTQPQAGSTNAGYW) show a composition bias toward polar residues. Residues 124–243 (GSTNAGYWPA…HHEESPVPEA (120 aa)) are interaction with BLM. The tract at residues 131-230 (WPAQNSGARE…GLSTLNTAFQ (100 aa)) is winged helix domain (WHD); critical for endonuclease activity. Positions 270–372 (LLCVDIGETR…HRIYLVEEHG (103 aa)) constitute an ERCC4 domain. Residues D274, E277, and D307 contribute to the active site. Mg(2+) is bound by residues D274, E277, D307, E333, and R334. The tract at residues 471 to 545 (VREVFARQLM…LSRTLYQLYC (75 aa)) is helix-hairpin-helix (2HhH); involved in DNA recognition and bending.

The protein belongs to the XPF family. Part of the heterodimeric DNA structure-specific endonuclease complex MUS81-EME1. Part of the heterodimeric DNA structure-specific endonuclease complex MUS81-EME2. Interacts with BLM; may stimulate the endonuclease activity of MUS81. Interacts with SLX4/BTBD12; this interaction is direct and links the MUS81-EME1 complex to SLX4, which may coordinate the action of the structure-specific endonuclease during DNA repair. Interacts with DCLRE1B/Apollo. Interacts with RECQL5; this interaction stimulates mitotic DNA synthesis. Interacts with CHEK2. Mg(2+) serves as cofactor.

It is found in the nucleus. The protein resides in the nucleolus. Catalytic subunit of two functionally distinct, structure-specific, heterodimeric DNA endonucleases MUS81-EME1 and MUS81-EME2 that are involved in the maintenance of genome stability. Both endonucleases have essentially the same substrate specificity though MUS81-EME2 is more active than its MUS81-EME1 counterpart. Both cleave 3'-flaps and nicked Holliday junctions, and exhibit limited endonuclease activity with 5' flaps and nicked double-stranded DNAs. MUS81-EME2 which is active during the replication of DNA is more specifically involved in replication fork processing. Replication forks frequently encounter obstacles to their passage, including DNA base lesions, DNA interstrand cross-links, difficult-to-replicate sequences, transcription bubbles, or tightly bound proteins. One mechanism for the restart of a stalled replication fork involves nucleolytic cleavage mediated by the MUS81-EME2 endonuclease. By acting upon the stalled fork, MUS81-EME2 generates a DNA double-strand break (DSB) that can be repaired by homologous recombination, leading to the restoration of an active fork. MUS81-EME2 could also function in telomere maintenance. MUS81-EME1, on the other hand, is active later in the cell cycle and functions in the resolution of mitotic recombination intermediates including the Holliday junctions, the four-way DNA intermediates that form during homologous recombination. This chain is Structure-specific endonuclease subunit MUS81, found in Rattus norvegicus (Rat).